The chain runs to 149 residues: 3-hydroxyacyl-[acyl-carrier-protein] dehydratase FabZ (149 aa).

H53 is an active-site residue.

This sequence belongs to the thioester dehydratase family. FabZ subfamily.

The protein localises to the cytoplasm. It carries out the reaction a (3R)-hydroxyacyl-[ACP] = a (2E)-enoyl-[ACP] + H2O. Functionally, involved in unsaturated fatty acids biosynthesis. Catalyzes the dehydration of short chain beta-hydroxyacyl-ACPs and long chain saturated and unsaturated beta-hydroxyacyl-ACPs. The protein is 3-hydroxyacyl-[acyl-carrier-protein] dehydratase FabZ of Neisseria meningitidis serogroup B (strain ATCC BAA-335 / MC58).